The following is a 525-amino-acid chain: G-protein regulator 1 (525 aa).

Residues 424 to 445 (PVDMMDLIFSMSSRMDDQRTEL) form the GoLoco domain. Residues 488-525 (HTMNRILKRSKKSKSSLDSTNSMQGDDTRSDDVTMTSK) form a disordered region.

In terms of assembly, interacts with gpr-1, lin-5 and GDP-bound goa-1.

The protein localises to the cytoplasm. Its subcellular location is the cell cortex. It is found in the cytoskeleton. It localises to the spindle. Its function is as follows. In the 1-cell embryo, probably together with gpr-2, controls nuclear rotation and spindle elongation during mitosis. Complex of gpr-1 and gpr-2, in association with lin-5, activates G-protein signaling to affect mitotic spindle force. Polarity determinants (par genes) may regulate lin-5/gpr-1/gpr-2/goa-1 locally to create the asymmetric forces that drive spindle movement. In Caenorhabditis elegans, this protein is G-protein regulator 1 (gpr-1).